A 684-amino-acid chain; its full sequence is Phenoloxidase 1 (684 aa).

The propeptide at 1–50 is removed by PPAF1; sequence MSDKNKLLLLFDRPLETVIVPRGPDQEAFDVPVDLLSDRYKAIGVQVSNR. A glycan (N-linked (GlcNAc...) asparagine) is linked at Asn-80. Cu cation contacts are provided by His-208, His-212, and His-237. The active-site Proton acceptor is the Glu-349. N-linked (GlcNAc...) asparagine glycans are attached at residues Asn-352 and Asn-356. Cu cation is bound by residues His-364, His-368, and His-404. Asn-486, Asn-491, and Asn-545 each carry an N-linked (GlcNAc...) asparagine glycan. 2 disulfide bridges follow: Cys-579-Cys-621 and Cys-581-Cys-628.

It belongs to the tyrosinase family. Dimer. Might form a homodimer or a heterodimer with PPO1. Might interact with PPAF2 (via CLIP domain); the interaction might be required for PPO1 activity. The cofactor is Cu(2+). In terms of processing, propeptide cleaved by PPAF1. In terms of tissue distribution, hemocytes.

The protein resides in the secreted. In terms of biological role, this is a copper-containing oxidase that functions in the formation of pigments such as melanins and other polyphenolic compounds. Catalyzes the oxidation of o-diphenols (N-acetyldopamine, 4-methylcatechol and dopamine). Cannot oxidize monophenols and p-phenols (L-tyrosine, tyramine, gentisic acid and hydroquinone). Binds to the surface of hemocytes and is involved in hemocyte melanization. Activation of the enzyme in response to bacterial lipopolysaccharides (LPS) suggests it may play a role in innate immunity. This Holotrichia diomphalia (Korean black chafer) protein is Phenoloxidase 1.